The chain runs to 252 residues: Ribosomal RNA small subunit methyltransferase A (252 aa).

6 residues coordinate S-adenosyl-L-methionine: Asn-10, Leu-12, Gly-36, Glu-57, Asp-81, and Asn-98.

The protein belongs to the class I-like SAM-binding methyltransferase superfamily. rRNA adenine N(6)-methyltransferase family. RsmA subfamily.

It is found in the cytoplasm. The enzyme catalyses adenosine(1518)/adenosine(1519) in 16S rRNA + 4 S-adenosyl-L-methionine = N(6)-dimethyladenosine(1518)/N(6)-dimethyladenosine(1519) in 16S rRNA + 4 S-adenosyl-L-homocysteine + 4 H(+). In terms of biological role, specifically dimethylates two adjacent adenosines (A1518 and A1519) in the loop of a conserved hairpin near the 3'-end of 16S rRNA in the 30S particle. May play a critical role in biogenesis of 30S subunits. This chain is Ribosomal RNA small subunit methyltransferase A, found in Mycoplasmopsis pulmonis (strain UAB CTIP) (Mycoplasma pulmonis).